Reading from the N-terminus, the 381-residue chain is Acetylornithine deacetylase (381 aa).

His-79 lines the Zn(2+) pocket. The active site involves Asp-81. Asp-111 serves as a coordination point for Zn(2+). Glu-143 is an active-site residue. The Zn(2+) site is built by Glu-144, Glu-168, and His-354.

It belongs to the peptidase M20A family. ArgE subfamily. As to quaternary structure, homodimer. Zn(2+) is required as a cofactor. The cofactor is Co(2+). Glutathione serves as cofactor.

The protein resides in the cytoplasm. It carries out the reaction N(2)-acetyl-L-ornithine + H2O = L-ornithine + acetate. It functions in the pathway amino-acid biosynthesis; L-arginine biosynthesis; L-ornithine from N(2)-acetyl-L-ornithine (linear): step 1/1. Catalyzes the hydrolysis of the amide bond of N(2)-acetylated L-amino acids. Cleaves the acetyl group from N-acetyl-L-ornithine to form L-ornithine, an intermediate in L-arginine biosynthesis pathway, and a branchpoint in the synthesis of polyamines. This chain is Acetylornithine deacetylase, found in Buchnera aphidicola subsp. Acyrthosiphon pisum (strain 5A).